Consider the following 323-residue polypeptide: Elongation factor P--(R)-beta-lysine ligase (323 aa).

76-78 provides a ligand contact to substrate; the sequence is SPE. ATP contacts are provided by residues 100–102 and Asn-109; that span reads RNE. A substrate-binding site is contributed by Tyr-118. Residue 242–243 coordinates ATP; that stretch reads EL. Substrate is bound at residue Glu-249. Position 298 (Gly-298) interacts with ATP.

This sequence belongs to the class-II aminoacyl-tRNA synthetase family. EpmA subfamily. Homodimer.

It catalyses the reaction D-beta-lysine + L-lysyl-[protein] + ATP = N(6)-((3R)-3,6-diaminohexanoyl)-L-lysyl-[protein] + AMP + diphosphate + H(+). Functionally, with EpmB is involved in the beta-lysylation step of the post-translational modification of translation elongation factor P (EF-P). Catalyzes the ATP-dependent activation of (R)-beta-lysine produced by EpmB, forming a lysyl-adenylate, from which the beta-lysyl moiety is then transferred to the epsilon-amino group of a conserved specific lysine residue in EF-P. This is Elongation factor P--(R)-beta-lysine ligase from Haemophilus influenzae (strain ATCC 51907 / DSM 11121 / KW20 / Rd).